Here is a 381-residue protein sequence, read N- to C-terminus: Alcohol dehydrogenase-like 6 (381 aa).

8 residues coordinate Zn(2+): Cys53, Ser55, His72, Cys102, Cys105, Cys108, Cys116, and Cys179. Ser55 and His72 together coordinate an alcohol. Residue Ser55 coordinates NAD(+). NAD(+) is bound by residues 204 to 209, Asp228, Lys233, 297 to 299, Phe324, and Arg374; these read GLGTVG and LGV.

Belongs to the zinc-containing alcohol dehydrogenase family. Class-III subfamily. As to quaternary structure, homodimer. Zn(2+) is required as a cofactor.

Its subcellular location is the cytoplasm. It carries out the reaction a primary alcohol + NAD(+) = an aldehyde + NADH + H(+). The catalysed reaction is a secondary alcohol + NAD(+) = a ketone + NADH + H(+). The sequence is that of Alcohol dehydrogenase-like 6 from Arabidopsis thaliana (Mouse-ear cress).